The sequence spans 297 residues: Phosphoribosylaminoimidazole-succinocarboxamide synthase (297 aa).

Belongs to the SAICAR synthetase family.

It catalyses the reaction 5-amino-1-(5-phospho-D-ribosyl)imidazole-4-carboxylate + L-aspartate + ATP = (2S)-2-[5-amino-1-(5-phospho-beta-D-ribosyl)imidazole-4-carboxamido]succinate + ADP + phosphate + 2 H(+). It participates in purine metabolism; IMP biosynthesis via de novo pathway; 5-amino-1-(5-phospho-D-ribosyl)imidazole-4-carboxamide from 5-amino-1-(5-phospho-D-ribosyl)imidazole-4-carboxylate: step 1/2. The chain is Phosphoribosylaminoimidazole-succinocarboxamide synthase from Saccharopolyspora erythraea (strain ATCC 11635 / DSM 40517 / JCM 4748 / NBRC 13426 / NCIMB 8594 / NRRL 2338).